A 336-amino-acid chain; its full sequence is Foldase protein PrsA (336 aa).

The first 22 residues, 1 to 22 (MKSAKKLLSVLCLGIFILTFTA), serve as a signal peptide directing secretion. Cys-23 carries the N-palmitoyl cysteine lipid modification. Cys-23 is lipidated: S-diacylglycerol cysteine. A PpiC domain is found at 194–286 (PNTMNVSHIL…FGYHIIKINS (93 aa)).

This sequence belongs to the PrsA family.

It is found in the cell membrane. The enzyme catalyses [protein]-peptidylproline (omega=180) = [protein]-peptidylproline (omega=0). Functionally, plays a major role in protein secretion by helping the post-translocational extracellular folding of several secreted proteins. This Clostridium botulinum (strain 657 / Type Ba4) protein is Foldase protein PrsA.